Consider the following 244-residue polypeptide: UDP-2,3-diacylglucosamine hydrolase (244 aa).

Residues Asp-8, His-10, Asp-41, Asn-79, and His-114 each coordinate Mn(2+). Residue Asn-79–Arg-80 participates in substrate binding. Residues Asp-122, Ser-160, Asn-164, Lys-167, and His-195 each coordinate substrate. Positions 195 and 197 each coordinate Mn(2+).

Belongs to the LpxH family. Mn(2+) is required as a cofactor.

Its subcellular location is the cell inner membrane. The enzyme catalyses UDP-2-N,3-O-bis[(3R)-3-hydroxytetradecanoyl]-alpha-D-glucosamine + H2O = 2-N,3-O-bis[(3R)-3-hydroxytetradecanoyl]-alpha-D-glucosaminyl 1-phosphate + UMP + 2 H(+). Its pathway is glycolipid biosynthesis; lipid IV(A) biosynthesis; lipid IV(A) from (3R)-3-hydroxytetradecanoyl-[acyl-carrier-protein] and UDP-N-acetyl-alpha-D-glucosamine: step 4/6. Its function is as follows. Hydrolyzes the pyrophosphate bond of UDP-2,3-diacylglucosamine to yield 2,3-diacylglucosamine 1-phosphate (lipid X) and UMP by catalyzing the attack of water at the alpha-P atom. Involved in the biosynthesis of lipid A, a phosphorylated glycolipid that anchors the lipopolysaccharide to the outer membrane of the cell. The chain is UDP-2,3-diacylglucosamine hydrolase from Marinobacter nauticus (strain ATCC 700491 / DSM 11845 / VT8) (Marinobacter aquaeolei).